Here is a 446-residue protein sequence, read N- to C-terminus: G patch domain-containing protein 4 (446 aa).

Position 1 is an N-acetylmethionine (methionine 1). Phosphothreonine is present on threonine 4. The G-patch domain occupies 11–57 (GMKFAEEQLLKHGWTQGKGLGRKENGITQALRVTLKQDTHGVGHDPA). Lysine 46 is covalently cross-linked (Glycyl lysine isopeptide (Lys-Gly) (interchain with G-Cter in SUMO2)). Threonine 116 is subject to Phosphothreonine. Disordered stretches follow at residues 116-140 (TSGG…SKSP) and 188-446 (QDPG…KKRD). Residues serine 128, serine 130, and serine 139 each carry the phosphoserine modification. The stretch at 166–251 (TMKAKLARLE…KKKRRHQEGK (86 aa)) forms a coiled coil. A compositionally biased stretch (basic and acidic residues) spans 219–237 (ASERNDADEKHPEHAEQNI). Residues 238-248 (RKSKKKKRRHQ) show a composition bias toward basic residues. Composition is skewed to basic and acidic residues over residues 249 to 268 (EGKV…KEDA), 297 to 328 (HHEE…ESRA), 363 to 375 (REAE…DGRS), and 392 to 409 (LDVR…ESRA). Basic residues-rich tracts occupy residues 416–427 (RGKRKRQQHPKK) and 437–446 (KAKKKQKKRD).

This chain is G patch domain-containing protein 4 (GPATCH4), found in Homo sapiens (Human).